Consider the following 320-residue polypeptide: ATP-dependent 6-phosphofructokinase (320 aa).

Gly-12 provides a ligand contact to ATP. Residues 22 to 26 (RGVVR) and 55 to 60 (RYSVSD) contribute to the ADP site. ATP contacts are provided by residues 73 to 74 (RF) and 103 to 106 (GDGS). Residue Asp-104 participates in Mg(2+) binding. Residue 126–128 (TID) participates in substrate binding. Asp-128 functions as the Proton acceptor in the catalytic mechanism. Residue Arg-155 participates in ADP binding. Substrate is bound by residues Arg-163 and 170 to 172 (MGR). ADP contacts are provided by residues 186-188 (GCE), Lys-212, and 214-216 (KKH). Substrate-binding positions include Glu-223, Arg-244, and 250–253 (HIQR).

Belongs to the phosphofructokinase type A (PFKA) family. ATP-dependent PFK group I subfamily. Prokaryotic clade 'B1' sub-subfamily. In terms of assembly, homotetramer. Requires Mg(2+) as cofactor.

Its subcellular location is the cytoplasm. The enzyme catalyses beta-D-fructose 6-phosphate + ATP = beta-D-fructose 1,6-bisphosphate + ADP + H(+). The protein operates within carbohydrate degradation; glycolysis; D-glyceraldehyde 3-phosphate and glycerone phosphate from D-glucose: step 3/4. Allosterically activated by ADP and other diphosphonucleosides, and allosterically inhibited by phosphoenolpyruvate. Its function is as follows. Catalyzes the phosphorylation of D-fructose 6-phosphate to fructose 1,6-bisphosphate by ATP, the first committing step of glycolysis. The polypeptide is ATP-dependent 6-phosphofructokinase (Enterobacter cloacae).